The chain runs to 264 residues: Purine nucleoside phosphorylase slr1573 (264 aa).

3 residues coordinate Zn(2+): histidine 61, cysteine 104, and histidine 121.

This sequence belongs to the purine nucleoside phosphorylase YfiH/LACC1 family. As to quaternary structure, homodimer. Cu(2+) serves as cofactor. Zn(2+) is required as a cofactor.

The catalysed reaction is adenosine + phosphate = alpha-D-ribose 1-phosphate + adenine. It catalyses the reaction S-methyl-5'-thioadenosine + phosphate = 5-(methylsulfanyl)-alpha-D-ribose 1-phosphate + adenine. The enzyme catalyses inosine + phosphate = alpha-D-ribose 1-phosphate + hypoxanthine. It carries out the reaction adenosine + H2O + H(+) = inosine + NH4(+). In terms of biological role, purine nucleoside enzyme that catalyzes the phosphorolysis of adenosine and inosine nucleosides, yielding D-ribose 1-phosphate and the respective free bases, adenine and hypoxanthine. Also catalyzes the phosphorolysis of S-methyl-5'-thioadenosine into adenine and S-methyl-5-thio-alpha-D-ribose 1-phosphate. Also has adenosine deaminase activity. The protein is Purine nucleoside phosphorylase slr1573 of Synechocystis sp. (strain ATCC 27184 / PCC 6803 / Kazusa).